Here is a 340-residue protein sequence, read N- to C-terminus: Hyaluronan and proteoglycan link protein 2 (340 aa).

An N-terminal signal peptide occupies residues 1-26; the sequence is MPGWLTLPTLCRFLLWAFTIFHKAQG. Residues 34–144 form the Ig-like V-type domain; it reads PHYLLPPIHE…EDESVALTLS (111 aa). Cystine bridges form between C57/C128, C170/C240, C194/C215, C265/C336, and C290/C311. Link domains lie at 148–242 and 245–338; these read VVFP…FCFT and LAGQ…YCYA.

The protein belongs to the HAPLN family. In terms of tissue distribution, expressed only in adult brain.

Its subcellular location is the secreted. The protein localises to the extracellular space. It localises to the extracellular matrix. Functionally, mediates a firm binding of versican V2 to hyaluronic acid. May play a pivotal role in the formation of the hyaluronan-associated matrix in the central nervous system (CNS) which facilitates neuronal conduction and general structural stabilization. Binds to hyaluronic acid. The protein is Hyaluronan and proteoglycan link protein 2 (HAPLN2) of Homo sapiens (Human).